The following is a 386-amino-acid chain: Antilisterial bacteriocin subtilosin biosynthesis protein AlbE (386 aa).

Involved in the production of the bacteriocin subtilosin. The polypeptide is Antilisterial bacteriocin subtilosin biosynthesis protein AlbE (albE) (Bacillus subtilis).